The primary structure comprises 372 residues: Glutamate 5-kinase (372 aa).

ATP is bound at residue Lys14. 3 residues coordinate substrate: Ser55, Asp142, and Asn154. Residues 174–175 (SD) and 216–222 (TGGMETK) each bind ATP. The region spanning 279–357 (QGSIIVDLGA…WEIADVLGHK (79 aa)) is the PUA domain.

This sequence belongs to the glutamate 5-kinase family.

Its subcellular location is the cytoplasm. The catalysed reaction is L-glutamate + ATP = L-glutamyl 5-phosphate + ADP. It participates in amino-acid biosynthesis; L-proline biosynthesis; L-glutamate 5-semialdehyde from L-glutamate: step 1/2. Its function is as follows. Catalyzes the transfer of a phosphate group to glutamate to form L-glutamate 5-phosphate. The polypeptide is Glutamate 5-kinase (Carboxydothermus hydrogenoformans (strain ATCC BAA-161 / DSM 6008 / Z-2901)).